The chain runs to 578 residues: Putative diflavin flavoprotein A 2 (578 aa).

Residues 39 to 233 (QQGTTSNSYL…PPPRLYAPAH (195 aa)) are zinc metallo-hydrolase. The Flavodoxin-like domain occupies 262–404 (VALFYASAYG…AANEFAQALK (143 aa)). The flavodoxin-reductase-like stretch occupies residues 429–578 (VNRVVGSLCV…TAIQHRKTSS (150 aa)).

This sequence in the N-terminal section; belongs to the zinc metallo-hydrolase group 3 family. The protein in the C-terminal section; belongs to the flavodoxin reductase family. It depends on Fe cation as a cofactor.

In terms of biological role, mediates electron transfer from NADH to oxygen, reducing it to water. This modular protein has 3 redox cofactors, in other organisms the same activity requires 2 or 3 proteins. This Thermosynechococcus vestitus (strain NIES-2133 / IAM M-273 / BP-1) protein is Putative diflavin flavoprotein A 2 (dfa2).